The chain runs to 260 residues: Histidinol-phosphatase (260 aa).

The Mg(2+) site is built by glutamate 67, aspartate 83, isoleucine 85, and aspartate 86. Position 67 (glutamate 67) interacts with substrate. Substrate contacts are provided by residues 85–88 (IDGT), arginine 185, and aspartate 213. Aspartate 213 contacts Mg(2+).

The protein belongs to the inositol monophosphatase superfamily. Mg(2+) serves as cofactor.

The catalysed reaction is L-histidinol phosphate + H2O = L-histidinol + phosphate. It participates in amino-acid biosynthesis; L-histidine biosynthesis; L-histidine from 5-phospho-alpha-D-ribose 1-diphosphate: step 8/9. Functionally, catalyzes the dephosphorylation of histidinol-phosphate to histidinol, the direct precursor of histidine. The chain is Histidinol-phosphatase (hisN) from Mycobacterium tuberculosis (strain ATCC 25618 / H37Rv).